Reading from the N-terminus, the 65-residue chain is Large ribosomal subunit protein bL31 (65 aa).

Zn(2+) is bound by residues cysteine 16, cysteine 18, cysteine 36, and cysteine 39.

This sequence belongs to the bacterial ribosomal protein bL31 family. Type A subfamily. As to quaternary structure, part of the 50S ribosomal subunit. Zn(2+) serves as cofactor.

Its function is as follows. Binds the 23S rRNA. This chain is Large ribosomal subunit protein bL31, found in Brevibacillus brevis (strain 47 / JCM 6285 / NBRC 100599).